Here is a 100-residue protein sequence, read N- to C-terminus: Apolipoprotein C-II (100 aa).

A signal peptide spans 1-22; that stretch reads MGSRFLLALFLVLLVLGYEVQG. A lipid binding region spans residues 66–74; sequence SVDEKLRDM. Residues 78 to 100 form a lipoprotein lipase cofactor region; the sequence is SSAAVSTYAGIFTDQILTLLKGE.

It belongs to the apolipoprotein C2 family. Proapolipoprotein C-II is synthesized as a sialic acid containing glycoprotein which is subsequently desialylated prior to its proteolytic processing. In terms of processing, proapolipoprotein C-II, the major form found in plasma undergoes proteolytic cleavage of its N-terminal hexapeptide to generate the mature form apolipoprotein C-II, which occurs as the minor form in plasma.

The protein localises to the secreted. Component of chylomicrons, very low-density lipoproteins (VLDL), low-density lipoproteins (LDL), and high-density lipoproteins (HDL) in plasma. Plays an important role in lipoprotein metabolism as an activator of lipoprotein lipase. The polypeptide is Apolipoprotein C-II (Apoc2) (Neotoma lepida (Desert woodrat)).